The chain runs to 104 residues: uncharacterized protein (104 aa).

It belongs to the mimivirus L28/L54 family.

This is an uncharacterized protein from Acanthamoeba polyphaga mimivirus (APMV).